Consider the following 214-residue polypeptide: Soluble inorganic pyrophosphatase (214 aa).

Substrate-binding residues include lysine 64, arginine 78, and tyrosine 90. Residues aspartate 100, aspartate 105, and aspartate 137 each coordinate Mg(2+). Tyrosine 174 is a substrate binding site.

Belongs to the PPase family. Mg(2+) is required as a cofactor.

Its subcellular location is the cytoplasm. The enzyme catalyses diphosphate + H2O = 2 phosphate + H(+). The protein is Soluble inorganic pyrophosphatase (IPP) of Oryza sativa subsp. indica (Rice).